Here is a 185-residue protein sequence, read N- to C-terminus: uncharacterized protein (185 aa).

This is an uncharacterized protein from Archaeoglobus fulgidus (strain ATCC 49558 / DSM 4304 / JCM 9628 / NBRC 100126 / VC-16).